A 458-amino-acid polypeptide reads, in one-letter code: MEEGLLRHENDRDDRRITACVILSTFVAVCSSFSYGCANGYTSGAETAIMKELDLSMAQFSAFGSFLNLGGAVGALFSGQLAVILGRRRTLWACDLFCIFGWLSIAFAKNVLWLDLGRISLGIGVGLTSYVVPVYIAEITPKHVRGAFSASTLLLQNSGISLIYFFGTVINWRVLAVIGALPCFIPVIGIYFIPESPRWLAKIGSVKEVENSLHRLRGKDADVSDEAAEIQVMTKMLEEDSKSSFCDMFQKKYRRTLVVGIGLMLIQQLSGASGITYYSNAIFRKAGFSERLGSMIFGVFVIPKALVGLILVDRWGRRPLLLASAVGMSIGSLLIGVSFTLQEMNLFPEFIPVFVFINILVYFGFFAIGIGGLPWIIMSEIFPINIKVSAGSIVALTSWTTGWFVSYGFNFMFEWSAQGTFYIFAMVGGLSLLFIWMLVPETKGQSLEELQASLTGTT.

The next 12 helical transmembrane spans lie at 17–37, 66–86, 96–116, 119–139, 150–170, 174–194, 257–277, 292–312, 319–339, 350–370, 393–413, and 419–439; these read ITAC…SYGC, FLNL…VILG, LFCI…WLDL, ISLG…IAEI, ASTL…GTVI, VLAV…YFIP, LVVG…GITY, LGSM…LILV, PLLL…GVSF, FIPV…AIGI, IVAL…NFMF, and GTFY…WMLV.

It belongs to the major facilitator superfamily. Sugar transporter (TC 2.A.1.1) family.

The protein resides in the membrane. In terms of biological role, sugar transporter. This is Sugar transporter ERD6-like 10 from Arabidopsis thaliana (Mouse-ear cress).